A 178-amino-acid polypeptide reads, in one-letter code: Cell division protein SepF (178 aa).

Residues 21–46 (YESEQSVATHHDEERPQAQEREERRA) are compositionally biased toward basic and acidic residues. Positions 21–65 (YESEQSVATHHDEERPQAQEREERRAPAPVREVVREMPTVDAEEE) are disordered.

Belongs to the SepF family. Homodimer. Interacts with FtsZ.

The protein localises to the cytoplasm. Its function is as follows. Cell division protein that is part of the divisome complex and is recruited early to the Z-ring. Probably stimulates Z-ring formation, perhaps through the cross-linking of FtsZ protofilaments. Its function overlaps with FtsA. The chain is Cell division protein SepF from Paenarthrobacter aurescens (strain TC1).